Consider the following 617-residue polypeptide: Hemagglutinin glycoprotein (617 aa).

Residues 1–37 (MSPQRDRINAFYKDNPHPKGSRIVINREHLMIDRPYV) lie on the Intravirion side of the membrane. The segment at 1–154 (MSPQRDRINA…RIKLDYDQYC (154 aa)) is stalk. A helical; Signal-anchor for type II membrane protein transmembrane segment spans residues 38-58 (LLAVLFVMFLSLIGLLAIAGI). Over 59–617 (RLHRAAIYTA…VTREDGTNRR (559 aa)) the chain is Virion surface. N-linked (GlcNAc...) asparagine; by host glycans are attached at residues N168, N187, N200, N215, and N238. 5 disulfides stabilise this stretch: C188/C606, C287/C300, C381/C494, C386/C394, and C570/C579. Positions 458–543 (PMKNLALGVI…VEHAVVYYVY (86 aa)) are interaction with host NECTIN4 receptor.

The protein belongs to the paramyxoviruses hemagglutinin-neuraminidase family. Non-sialidase subfamily. Homodimer; disulfide-linked. Further forms homotetramer (dimer of dimers). Interacts (via C-terminus) with human NECTIN4 (via N-terminus); this interaction allows attachment to the respiratory epithelium and viral entry. Interacts (via C-terminus) with human SLAMF1/CD150 (via N-terminus); this interaction allows attachment and viral entry into the CD150-expressing immune cells. Interacts with human CD46 antigen; this interaction allows attachment and viral entry of vaccine and laboratory-adapted strains.

It localises to the virion membrane. Its subcellular location is the host cell membrane. In terms of biological role, attaches the virus to the human SLAMF1/CD150 receptor for entry into host dendritic cells, macrophages, activated memory T cells and naive or memory B cells, thereby explaining the long immunosuppression that follows infection. In the respiratory airways, binds to the NECTIN4 receptor for entry into the host cell. Binding of H protein to the receptor induces a conformational change that allows the F protein to trigger virion/cell membranes fusion. The vaccine and laboratory-adapted strains use host CD46 as an alternate receptor. The high degree of interaction between H and CD46 results in down-regulation of the latter from the surface of infected cells, rendering them more sensitive to c3b-mediated complement lysis. The sequence is that of Hemagglutinin glycoprotein (H) from Homo sapiens (Human).